The primary structure comprises 332 residues: Cysteine and histidine-rich domain-containing protein 1 (332 aa).

An N-acetylalanine modification is found at alanine 2. The segment at 2–77 (ALLCYNRGCG…KPPEPVKPEV (76 aa)) is interaction with PPP5C. Cysteine 5, cysteine 10, cysteine 24, histidine 27, cysteine 42, and cysteine 43 together coordinate Zn(2+). CHORD domains are found at residues 5–64 (CYNR…KGRH) and 157–216 (CKNG…TGKH). Residue threonine 47 is modified to Phosphothreonine. Residue serine 51 is modified to Phosphoserine. Positions 59, 64, 157, 162, 176, 179, 194, 195, 211, and 216 each coordinate Zn(2+). A disordered region spans residues 62–82 (GRHNSEKPPEPVKPEVKTTEK). Basic and acidic residues predominate over residues 64-82 (HNSEKPPEPVKPEVKTTEK). The tract at residues 65-316 (NSEKPPEPVK…AEPMQWASLE (252 aa)) is interaction with HSP90AA1 and HSP90AB1. The CS domain maps to 227–316 (VVPCRHDWHQ…AEPMQWASLE (90 aa)).

As to quaternary structure, interacts with HSP90AA1, HSP90AB1, PPP5C, ROCK1 and ROCK2.

Regulates centrosome duplication, probably by inhibiting the kinase activity of ROCK2. Proposed to act as co-chaperone for HSP90. May play a role in the regulation of NOD1 via a HSP90 chaperone complex. In vitro, has intrinsic chaperone activity. This function may be achieved by inhibiting association of ROCK2 with NPM1. Plays a role in ensuring the localization of the tyrosine kinase receptor EGFR to the plasma membrane, and thus ensures the subsequent regulation of EGFR activity and EGF-induced actin cytoskeleton remodeling. Involved in stress response. Prevents tumorigenesis. This chain is Cysteine and histidine-rich domain-containing protein 1 (CHORDC1), found in Bos taurus (Bovine).